The chain runs to 189 residues: Guanylate kinase (189 aa).

The region spanning 8-186 is the Guanylate kinase-like domain; sequence GKLTVITGPS…AVIELESLMG (179 aa). 15–22 lines the ATP pocket; it reads GPSGVGKG.

This sequence belongs to the guanylate kinase family.

It localises to the cytoplasm. It catalyses the reaction GMP + ATP = GDP + ADP. In terms of biological role, essential for recycling GMP and indirectly, cGMP. The chain is Guanylate kinase from Prochlorococcus marinus (strain MIT 9313).